Reading from the N-terminus, the 120-residue chain is Ribosome-binding factor A (120 aa).

This sequence belongs to the RbfA family. Monomer. Binds 30S ribosomal subunits, but not 50S ribosomal subunits or 70S ribosomes.

It is found in the cytoplasm. One of several proteins that assist in the late maturation steps of the functional core of the 30S ribosomal subunit. Associates with free 30S ribosomal subunits (but not with 30S subunits that are part of 70S ribosomes or polysomes). Required for efficient processing of 16S rRNA. May interact with the 5'-terminal helix region of 16S rRNA. This chain is Ribosome-binding factor A, found in Buchnera aphidicola subsp. Acyrthosiphon pisum (strain 5A).